The sequence spans 317 residues: Ribose-phosphate pyrophosphokinase (317 aa).

ATP is bound by residues 41-43 and 100-101; these read DME and RQ. Residues histidine 134 and aspartate 174 each contribute to the Mg(2+) site. Lysine 197 is an active-site residue. Residues arginine 199, aspartate 223, and 227–231 contribute to the D-ribose 5-phosphate site; that span reads DSGGT.

It belongs to the ribose-phosphate pyrophosphokinase family. Class I subfamily. Homohexamer. Mg(2+) is required as a cofactor.

It localises to the cytoplasm. The catalysed reaction is D-ribose 5-phosphate + ATP = 5-phospho-alpha-D-ribose 1-diphosphate + AMP + H(+). It functions in the pathway metabolic intermediate biosynthesis; 5-phospho-alpha-D-ribose 1-diphosphate biosynthesis; 5-phospho-alpha-D-ribose 1-diphosphate from D-ribose 5-phosphate (route I): step 1/1. In terms of biological role, involved in the biosynthesis of the central metabolite phospho-alpha-D-ribosyl-1-pyrophosphate (PRPP) via the transfer of pyrophosphoryl group from ATP to 1-hydroxyl of ribose-5-phosphate (Rib-5-P). This chain is Ribose-phosphate pyrophosphokinase, found in Bradyrhizobium diazoefficiens (strain JCM 10833 / BCRC 13528 / IAM 13628 / NBRC 14792 / USDA 110).